A 938-amino-acid chain; its full sequence is Translation initiation factor IF-2 (938 aa).

Residues 57–205 (DKSKKVASKE…PKSEETKSEE (149 aa)) are compositionally biased toward basic and acidic residues. The segment at 57–350 (DKSKKVASKE…RSADDLAQQE (294 aa)) is disordered. Acidic residues predominate over residues 206–215 (TTEGGESEEK). Positions 248 to 259 (KKEEKKEDDKKD) are enriched in basic and acidic residues. Composition is skewed to basic residues over residues 260–270 (KDRRKKRRRRI) and 285–296 (GAKKGGRTRSKP). Basic and acidic residues predominate over residues 297–319 (ITKEEPTEEEVQKQVRETLEKLQ). Over residues 323–333 (SKGKGAKYRRQ) the composition is skewed to basic residues. Basic and acidic residues predominate over residues 334-344 (KRDEHRQRSAD). The tr-type G domain maps to 434–602 (TRAPIVTVMG…KVLLEAEILE (169 aa)). A G1 region spans residues 443–450 (GHVDHGKT). 443–450 (GHVDHGKT) provides a ligand contact to GTP. The segment at 468 to 472 (GITQH) is G2. The segment at 490–493 (DTPG) is G3. Residues 490-494 (DTPGH) and 544-547 (NKSD) contribute to the GTP site. The interval 544-547 (NKSD) is G4. Positions 580–582 (SAK) are G5.

The protein belongs to the TRAFAC class translation factor GTPase superfamily. Classic translation factor GTPase family. IF-2 subfamily.

The protein localises to the cytoplasm. Functionally, one of the essential components for the initiation of protein synthesis. Protects formylmethionyl-tRNA from spontaneous hydrolysis and promotes its binding to the 30S ribosomal subunits. Also involved in the hydrolysis of GTP during the formation of the 70S ribosomal complex. In Christiangramia forsetii (strain DSM 17595 / CGMCC 1.15422 / KT0803) (Gramella forsetii), this protein is Translation initiation factor IF-2.